The primary structure comprises 277 residues: MGLLECCARCLVGAPFASLVATGLCFFGVALFCGCGHEALTGTEKLIETYFSKNYQDYEYLINVIHAFQYVIYGTASFFFLYGALLLAEGFYTTGAVRQIFGDYKTTICGKGLSATVTGGQKGRGSRGQHQAHSLERVCHCLGKWLGHPDKFVGITYALTIVWLLVFACSAVPVYIYFNTWTTCQSIAFPSKTSASIGSLCADARMYGVLPWNAFPGKVCGSNLLSICKTAEFQMTFHLFIAAFVGAAATLVSLLTFMIAATYNFAVLKLMGRGTKF.

Residues 1–10 lie on the Cytoplasmic side of the membrane; it reads MGLLECCARC. Residues C6, C7, and C10 are each lipidated (S-palmitoyl cysteine). The chain crosses the membrane as a helical span at residues 11 to 36; sequence LVGAPFASLVATGLCFFGVALFCGCG. The Extracellular segment spans residues 37-59; it reads HEALTGTEKLIETYFSKNYQDYE. Residues 60-88 form a helical membrane-spanning segment; sequence YLINVIHAFQYVIYGTASFFFLYGALLLA. Residues 89–151 lie on the Cytoplasmic side of the membrane; that stretch reads EGFYTTGAVR…LGKWLGHPDK (63 aa). Residue C109 is the site of S-palmitoyl cysteine attachment. S114 carries the phosphoserine modification. T116 and T118 each carry phosphothreonine. S-palmitoyl cysteine attachment occurs at residues C139 and C141. A helical membrane pass occupies residues 152-178; sequence FVGITYALTIVWLLVFACSAVPVYIYF. The Extracellular segment spans residues 179-238; the sequence is NTWTTCQSIAFPSKTSASIGSLCADARMYGVLPWNAFPGKVCGSNLLSICKTAEFQMTFH. 2 cysteine pairs are disulfide-bonded: C184/C228 and C201/C220. The O-palmitoyl serine moiety is linked to residue S199. The helical transmembrane segment at 239 to 268 threads the bilayer; sequence LFIAAFVGAAATLVSLLTFMIAATYNFAVL. Topologically, residues 269-277 are cytoplasmic; sequence KLMGRGTKF.

The protein belongs to the myelin proteolipid protein family.

It is found in the cell membrane. The protein resides in the myelin membrane. Functionally, this is the major myelin protein from the central nervous system. It plays an important role in the formation or maintenance of the multilamellar structure of myelin. The sequence is that of Myelin proteolipid protein (PLP1) from Canis lupus familiaris (Dog).